Consider the following 258-residue polypeptide: Imidazole glycerol phosphate synthase subunit HisF (258 aa).

Catalysis depends on residues Asp11 and Asp130.

The protein belongs to the HisA/HisF family. Heterodimer of HisH and HisF.

Its subcellular location is the cytoplasm. It carries out the reaction 5-[(5-phospho-1-deoxy-D-ribulos-1-ylimino)methylamino]-1-(5-phospho-beta-D-ribosyl)imidazole-4-carboxamide + L-glutamine = D-erythro-1-(imidazol-4-yl)glycerol 3-phosphate + 5-amino-1-(5-phospho-beta-D-ribosyl)imidazole-4-carboxamide + L-glutamate + H(+). It functions in the pathway amino-acid biosynthesis; L-histidine biosynthesis; L-histidine from 5-phospho-alpha-D-ribose 1-diphosphate: step 5/9. Its function is as follows. IGPS catalyzes the conversion of PRFAR and glutamine to IGP, AICAR and glutamate. The HisF subunit catalyzes the cyclization activity that produces IGP and AICAR from PRFAR using the ammonia provided by the HisH subunit. The polypeptide is Imidazole glycerol phosphate synthase subunit HisF (Escherichia coli O6:K15:H31 (strain 536 / UPEC)).